We begin with the raw amino-acid sequence, 289 residues long: Segregation and condensation protein A (289 aa).

A compositionally biased stretch (basic and acidic residues) spans 1–18 (MSEDRRSPTDEAPREGEL). Residues 1–24 (MSEDRRSPTDEAPREGELPRSPGD) form a disordered region.

This sequence belongs to the ScpA family. Component of the Structural Maintenance of Chromosome (SMC) condensin-like complex composed of ScpA, ScpB and the Smc homodimer. ScpA and ScpB bind to the head domain of Smc. The presence of the three proteins is required for the association of the complex with DNA.

It is found in the cytoplasm. A conditionally essential component of the chromosome segregation machinery. Participates in chromosomal partition during cell division. Important for positioning of ParB-parS complexes (ori of replication) and of the ter replication site, as well as for segration of the ParB-parS complex and thus chromosome segregation. May act via the formation of a condensin-like complex containing Smc, ScpA and ScpB that pulls DNA away from mid-cell into both cell halves. The polypeptide is Segregation and condensation protein A (Myxococcus xanthus (strain DK1622)).